The sequence spans 87 residues: Small ribosomal subunit protein bS20 (87 aa).

This sequence belongs to the bacterial ribosomal protein bS20 family.

Its function is as follows. Binds directly to 16S ribosomal RNA. The protein is Small ribosomal subunit protein bS20 of Parvibaculum lavamentivorans (strain DS-1 / DSM 13023 / NCIMB 13966).